Here is a 69-residue protein sequence, read N- to C-terminus: Large ribosomal subunit protein uL30 (69 aa).

This sequence belongs to the universal ribosomal protein uL30 family. As to quaternary structure, part of the 50S ribosomal subunit.

The protein is Large ribosomal subunit protein uL30 of Rhizobium etli (strain ATCC 51251 / DSM 11541 / JCM 21823 / NBRC 15573 / CFN 42).